We begin with the raw amino-acid sequence, 254 residues long: Type III pantothenate kinase (254 aa).

Residue 6–13 (DVGNTNIV) participates in ATP binding. 107–110 (GADR) provides a ligand contact to substrate. Aspartate 109 (proton acceptor) is an active-site residue. Aspartate 129 lines the K(+) pocket. Residue threonine 132 participates in ATP binding. A substrate-binding site is contributed by threonine 184.

It belongs to the type III pantothenate kinase family. In terms of assembly, homodimer. NH4(+) serves as cofactor. The cofactor is K(+).

Its subcellular location is the cytoplasm. It catalyses the reaction (R)-pantothenate + ATP = (R)-4'-phosphopantothenate + ADP + H(+). It participates in cofactor biosynthesis; coenzyme A biosynthesis; CoA from (R)-pantothenate: step 1/5. Functionally, catalyzes the phosphorylation of pantothenate (Pan), the first step in CoA biosynthesis. This is Type III pantothenate kinase from Exiguobacterium sp. (strain ATCC BAA-1283 / AT1b).